The primary structure comprises 707 residues: Choline transporter-like protein 4 (707 aa).

The Cytoplasmic portion of the chain corresponds to 1–32 (MGEKQDPDKAYGKPAKYDPSFRGPIRNRSCTD). The chain crosses the membrane as a helical span at residues 33 to 53 (IICCVLFFVFILGYIAVGLVA). Over 54–226 (WVYGDPQQVL…KIFEDFAQSW (173 aa)) the chain is Extracellular. Residues Asn-67, Asn-142, Asn-184, and Asn-195 are each glycosylated (N-linked (GlcNAc...) asparagine). The chain crosses the membrane as a helical span at residues 227-247 (YWILAALGVALVLSLLFVLLL). At 248 to 249 (RL) the chain is on the cytoplasmic side. The helical transmembrane segment at 250-270 (VAGPLVFVLIIGVLGVLAYGI) threads the bilayer. Residues 271 to 306 (YHCWNEYRLLRDKGASISQLGFTTNLSAYSSVQETW) lie on the Extracellular side of the membrane. Asn-295 carries an N-linked (GlcNAc...) asparagine glycan. A helical transmembrane segment spans residues 307–327 (LAALILLAVLEGILLLMLIFL). Topologically, residues 328–355 (RQRIRIAIALLEEASRAVGQMMSTLFYP) are cytoplasmic. The helical transmembrane segment at 356–376 (LVTFVLLLVCIAYWAMTALYL) threads the bilayer. Topologically, residues 377-452 (ATSGQPQYVL…GVLGLFWTIN (76 aa)) are extracellular. Asn-390, Asn-402, and Asn-413 each carry an N-linked (GlcNAc...) asparagine glycan. A helical transmembrane segment spans residues 453 to 473 (WVLALGQCVLAGAFASFYWAF). At 474 to 498 (HKPRDIPTFPLSSAFIRTLRYHTGS) the chain is on the cytoplasmic side. A helical membrane pass occupies residues 499-519 (LAFGALILTLVQIARAILEYI). The Extracellular portion of the chain corresponds to 520–557 (DHKLRGAQNPVARCIMCCFKCCLWCLEKFIKFLNRNAY). Residues 558-578 (IMIAIYGKNFCVSAKNAFMLL) form a helical membrane-spanning segment. The Cytoplasmic segment spans residues 579–594 (MRNIVRVVVLDKVTDL). The chain crosses the membrane as a helical span at residues 595 to 615 (LLFFGKLLVVGGVGVLSFFFF). Residues 616–635 (TGRIQGLGKDFESPQLNYYW) lie on the Extracellular side of the membrane. The chain crosses the membrane as a helical span at residues 636-656 (LPIMTSIMGAYVIASGFFSVF). Residues 657-707 (GMCVDTLFLCFLEDLERNDGSLDRPYYMSKALLKILGKKNEVPSGDKKRKK) are Cytoplasmic-facing.

It belongs to the CTL (choline transporter-like) family. N-glycosylated; N-glycosylation of Asn-677 and Asn-390 is required for a proper thiamine pyrophosphate uptake.

It is found in the membrane. The protein localises to the apical cell membrane. It carries out the reaction choline(out) + n H(+)(in) = choline(in) + n H(+)(out). The catalysed reaction is thiamine diphosphate(out) = thiamine diphosphate(in). Its function is as follows. Choline transporter that plays a role in the choline-acetylcholine system and is required to the efferent innervation of hair cells in the olivocochlear bundle for the maintenance of physiological function of outer hair cells and the protection of hair cells from acoustic injury. Also described as a thiamine pyrophosphate transporter in colon, may mediate the absorption of microbiota-generated thiamine pyrophosphate and contribute to host thiamine (vitamin B1) homeostasis. The protein is Choline transporter-like protein 4 of Sus scrofa (Pig).